Reading from the N-terminus, the 162-residue chain is Interleukin-15 (162 aa).

The signal sequence occupies residues 1 to 29 (MRILKPYLRSTSIQCYLCLLLNSHFLTEA). Residues 30-48 (GIHVFILGCISAGLPKTEA) constitute a propeptide that is removed on maturation. 2 disulfides stabilise this stretch: cysteine 83/cysteine 133 and cysteine 90/cysteine 136. 3 N-linked (GlcNAc...) asparagine glycosylation sites follow: asparagine 113, asparagine 121, and asparagine 127.

This sequence belongs to the IL-15/IL-21 family.

The protein resides in the secreted. In terms of biological role, cytokine that plays a major role in the development of inflammatory and protective immune responses to microbial invaders and parasites by modulating immune cells of both the innate and adaptive immune systems. Stimulates the proliferation of natural killer cells, T-cells and B-cells and promotes the secretion of several cytokines. In monocytes, induces the production of IL8 and monocyte chemotactic protein 1/CCL2, two chemokines that attract neutrophils and monocytes respectively to sites of infection. Unlike most cytokines, which are secreted in soluble form, IL15 is expressed in association with its high affinity IL15RA on the surface of IL15-producing cells and delivers signals to target cells that express IL2RB and IL2RG receptor subunits. Binding to its receptor triggers the phosphorylation of JAK1 and JAK3 and the recruitment and subsequent phosphorylation of signal transducer and activator of transcription-3/STAT3 and STAT5. In mast cells, induces the rapid tyrosine phosphorylation of STAT6 and thereby controls mast cell survival and release of cytokines such as IL4. In Bubalus bubalis (Domestic water buffalo), this protein is Interleukin-15 (IL15).